A 396-amino-acid polypeptide reads, in one-letter code: Elongation factor Tu (396 aa).

The tr-type G domain maps to K10–V205. The segment at G19–T26 is G1. Position 19–26 (G19–T26) interacts with GTP. A Mg(2+)-binding site is contributed by T26. The segment at G62 to N66 is G2. The interval D83 to G86 is G3. Residues D83 to H87 and N138 to D141 contribute to the GTP site. A G4 region spans residues N138 to D141. The segment at S175–L177 is G5.

Belongs to the TRAFAC class translation factor GTPase superfamily. Classic translation factor GTPase family. EF-Tu/EF-1A subfamily. Monomer.

The protein localises to the cytoplasm. The enzyme catalyses GTP + H2O = GDP + phosphate + H(+). Functionally, GTP hydrolase that promotes the GTP-dependent binding of aminoacyl-tRNA to the A-site of ribosomes during protein biosynthesis. In Rhodococcus erythropolis (strain PR4 / NBRC 100887), this protein is Elongation factor Tu.